We begin with the raw amino-acid sequence, 390 residues long: Chorismate synthase 2 (390 aa).

The NADP(+) site is built by Arg39 and Arg45. FMN is bound by residues Arg132–Ser134, Asn253–Ala254, Gly298, Lys313–Thr317, and Arg339.

This sequence belongs to the chorismate synthase family. Homotetramer. FMNH2 is required as a cofactor.

The enzyme catalyses 5-O-(1-carboxyvinyl)-3-phosphoshikimate = chorismate + phosphate. The protein operates within metabolic intermediate biosynthesis; chorismate biosynthesis; chorismate from D-erythrose 4-phosphate and phosphoenolpyruvate: step 7/7. In terms of biological role, catalyzes the anti-1,4-elimination of the C-3 phosphate and the C-6 proR hydrogen from 5-enolpyruvylshikimate-3-phosphate (EPSP) to yield chorismate, which is the branch point compound that serves as the starting substrate for the three terminal pathways of aromatic amino acid biosynthesis. This reaction introduces a second double bond into the aromatic ring system. This Bacillus thuringiensis (strain Al Hakam) protein is Chorismate synthase 2.